Here is a 644-residue protein sequence, read N- to C-terminus: Protein cueball (644 aa).

Residues 1-26 (MIRIRFGMDVLLVVLLATCLLTPAHG) form the signal peptide. At 27–531 (TPLEWDFAVT…VCLTPRVWTS (505 aa)) the chain is on the extracellular side. 2 N-linked (GlcNAc...) asparagine glycosylation sites follow: Asn-82 and Asn-108. 3 LDL-receptor class B repeats span residues 121–166 (MNLF…DVCR), 167–211 (RKLY…DQLS), and 212–257 (DRLF…TNDA). Residues Asn-175 and Asn-190 are each glycosylated (N-linked (GlcNAc...) asparagine). Asn-313 is a glycosylation site (N-linked (GlcNAc...) asparagine). EGF-like domains follow at residues 398–430 (EIRECHNYCVHGTCQMSELAYPKCYCQPGFTGE) and 433–471 (ELSVCSGLCLNGGHCRVSKDENEAPSCECPAKFGGARCE). Disulfide bonds link Cys-402/Cys-411, Cys-406/Cys-421, Cys-437/Cys-447, Cys-441/Cys-459, and Cys-461/Cys-470. N-linked (GlcNAc...) asparagine glycosylation is found at Asn-473 and Asn-508. A helical transmembrane segment spans residues 532–552 (SVIIILVVGIVSSLLLVAVIV). Topologically, residues 553 to 644 (HGIRRLYKPK…LIHNMEDDLY (92 aa)) are cytoplasmic.

The protein belongs to the cueball family.

The protein resides in the cell membrane. In terms of biological role, has a role in spermatogenesis and oogenesis. This Drosophila simulans (Fruit fly) protein is Protein cueball.